The chain runs to 333 residues: MKRRQKRKHLEIEESKEAGISKSQEDISHPESTGVPKAQSPGVGEVSSASEYFSCVSSPQKLIHRSKGTWKLLQDSSKPRSPLDQVPEGEATTAPSQQASSSCPSYKTCVSSLCMNKEERGMKIYYMQVQMKKGVAISWDTKETSESLEKQPRMEEATLPEGVWVGTPPSDVSTRNLLSDSEPIGEEKEHEEKPESDSPPGSPAVEERPRAKTPDWLVTMENGFRCMACCRVFATMESLQEHVQYGIREGFSCHVFHLTMAQLIGSMESESTQEEEEDHTEETEKPKEEKAEEQQPTEEDVGMKKPWSQCPGCVFDSPKDRRRRKDHCDNSGS.

Disordered stretches follow at residues 1–45, 73–107, and 143–214; these read MKRR…GVGE, LQDS…PSYK, and ETSE…AKTP. Residues 10-29 show a composition bias toward basic and acidic residues; it reads LEIEESKEAGISKSQEDISH. A compositionally biased stretch (low complexity) spans 92–105; sequence TTAPSQQASSSCPS. The span at 143–156 shows a compositional bias: basic and acidic residues; sequence ETSESLEKQPRMEE. A compositionally biased stretch (polar residues) spans 170-179; that stretch reads SDVSTRNLLS. Residues 185–196 show a composition bias toward basic and acidic residues; the sequence is GEEKEHEEKPES. The residue at position 213 (T213) is a Phosphothreonine. The C2H2-type; degenerate zinc finger occupies 224 to 248; that stretch reads FRCMACCRVFATMESLQEHVQYGIR. Positions 267–333 are disordered; sequence MESESTQEEE…RKDHCDNSGS (67 aa). The span at 271 to 281 shows a compositional bias: acidic residues; it reads STQEEEEDHTE. Positions 282 to 293 are enriched in basic and acidic residues; it reads ETEKPKEEKAEE. Position 308 is a phosphoserine (S308).

It belongs to the FAM170 family. In terms of tissue distribution, testis-specific.

Its subcellular location is the nucleus. In terms of biological role, acts as a nuclear transcription factor that positively regulates the expression of heat shock genes. Binds to heat shock promoter elements (HSE). This is Protein FAM170A (Fam170a) from Mus musculus (Mouse).